Here is a 309-residue protein sequence, read N- to C-terminus: Mycothiol acetyltransferase (309 aa).

N-acetyltransferase domains follow at residues 16–158 (ETLA…LDLP) and 166–309 (VSVR…RTET). Glu-47 contributes to the 1D-myo-inositol 2-(L-cysteinylamino)-2-deoxy-alpha-D-glucopyranoside binding site. Position 92–94 (92–94 (LVV)) interacts with acetyl-CoA. 1D-myo-inositol 2-(L-cysteinylamino)-2-deoxy-alpha-D-glucopyranoside-binding residues include Glu-193, Lys-232, and Glu-241. Residues 245-247 (LGI) and 252-258 (QGGGLGK) contribute to the acetyl-CoA site. Tyr-279 lines the 1D-myo-inositol 2-(L-cysteinylamino)-2-deoxy-alpha-D-glucopyranoside pocket.

Belongs to the acetyltransferase family. MshD subfamily. Monomer.

It carries out the reaction 1D-myo-inositol 2-(L-cysteinylamino)-2-deoxy-alpha-D-glucopyranoside + acetyl-CoA = mycothiol + CoA + H(+). Functionally, catalyzes the transfer of acetyl from acetyl-CoA to desacetylmycothiol (Cys-GlcN-Ins) to form mycothiol. This Streptomyces coelicolor (strain ATCC BAA-471 / A3(2) / M145) protein is Mycothiol acetyltransferase.